A 351-amino-acid chain; its full sequence is Spermidine/putrescine import ATP-binding protein PotA (351 aa).

In terms of domain architecture, ABC transporter spans 6–236 (LELRNVTKEY…PENAWVANFI (231 aa)). An ATP-binding site is contributed by 38 to 45 (GPSGCGKT).

It belongs to the ABC transporter superfamily. Spermidine/putrescine importer (TC 3.A.1.11.1) family. In terms of assembly, the complex is composed of two ATP-binding proteins (PotA), two transmembrane proteins (PotB and PotC) and a solute-binding protein (PotD).

It localises to the cell membrane. The catalysed reaction is ATP + H2O + polyamine-[polyamine-binding protein]Side 1 = ADP + phosphate + polyamineSide 2 + [polyamine-binding protein]Side 1.. Its function is as follows. Part of the ABC transporter complex PotABCD involved in spermidine/putrescine import. Responsible for energy coupling to the transport system. The chain is Spermidine/putrescine import ATP-binding protein PotA from Mycoplasma capricolum subsp. capricolum (strain California kid / ATCC 27343 / NCTC 10154).